We begin with the raw amino-acid sequence, 153 residues long: Aspartate carbamoyltransferase regulatory chain (153 aa).

Zn(2+) is bound by residues Cys109, Cys114, Cys138, and Cys141.

It belongs to the PyrI family. As to quaternary structure, contains catalytic and regulatory chains. Requires Zn(2+) as cofactor.

Involved in allosteric regulation of aspartate carbamoyltransferase. The chain is Aspartate carbamoyltransferase regulatory chain from Salmonella newport (strain SL254).